Here is a 2472-residue protein sequence, read N- to C-terminus: Telomere-associated protein RIF1 (2472 aa).

The disordered stretch occupies residues 1–25; it reads MTARGQSPLAPLLETLEDPSASHGG. Ser402 is modified (phosphoserine). Thr409 carries the post-translational modification Phosphothreonine. 3 positions are modified to phosphoserine: Ser782, Ser979, and Ser1008. At Thr1047 the chain carries Phosphothreonine. A disordered region spans residues 1145–1192; that stretch reads LEKSSLSNNECGSLDKTSPEMSNSNNDERKKALISSRKTSTECASSTE. Residues 1148–1169 are compositionally biased toward polar residues; the sequence is SSLSNNECGSLDKTSPEMSNSN. Position 1162 is a phosphoserine (Ser1162). Residue Thr1220 is modified to Phosphothreonine. 2 positions are modified to phosphoserine: Ser1236 and Ser1238. Basic and acidic residues-rich tracts occupy residues 1265 to 1279 and 1306 to 1315; these read AKQR…DSEK and MRSEPEKNTE. Disordered stretches follow at residues 1265–1318, 1398–1464, and 1479–1587; these read AKQR…EESV, MVNE…DVLP, and IEKG…DQEE. Polar residues predominate over residues 1400–1412; it reads NEDSQVQITPNQK. Phosphoserine is present on residues Ser1422, Ser1454, and Ser1513. Composition is skewed to basic and acidic residues over residues 1431 to 1464 and 1500 to 1530; these read SQDK…DVLP and EQNK…EKLV. At Thr1518 the chain carries Phosphothreonine. Residues Ser1542, Ser1552, Ser1554, Ser1556, and Ser1564 each carry the phosphoserine modification. The span at 1565–1574 shows a compositional bias: basic residues; sequence RKKRSGKWKN. 8 positions are modified to phosphoserine: Ser1576, Ser1579, Ser1613, Ser1616, Ser1688, Ser1693, Ser1706, and Ser1709. Positions 1762–1782 are disordered; it reads TKKADVQAPVSPSETSQANPY. Residues 1771–1782 are compositionally biased toward polar residues; sequence VSPSETSQANPY. At Thr1806 the chain carries Phosphothreonine. Residue Ser1810 is modified to Phosphoserine. Polar residues predominate over residues 1846 to 1859; the sequence is AMSLESQESPNENF. Residues 1846–1889 are disordered; that stretch reads AMSLESQESPNENFKTVGPCLGDSKNVSQESLETKEEKPEETPK. Phosphoserine occurs at positions 1873 and 1876. The segment covering 1877–1889 has biased composition (basic and acidic residues); the sequence is LETKEEKPEETPK. The interaction with condensed chromosomes in telophase stretch occupies residues 1924-2472; sequence EASFHGQERT…WRSPSHENSI (549 aa). Phosphoserine occurs at positions 1926 and 1971. The disordered stretch occupies residues 1992–2021; that stretch reads EQTAAGELDGGNDVSDLHSSEETNTKMKNN. Over residues 2006-2021 the composition is skewed to basic and acidic residues; that stretch reads SDLHSSEETNTKMKNN. A phosphoserine mark is found at Ser2144 and Ser2161. Thr2167 carries the phosphothreonine modification. The segment at 2170–2446 is interaction with ERCC6; it reads VWSPLASPST…SGSQLFEMHE (277 aa). Residues Ser2172, Ser2176, Ser2195, Ser2196, and Ser2205 each carry the phosphoserine modification. Residues 2227–2255 show a composition bias toward polar residues; sequence RSHSSNSSPIGKSVKTSPTTQSKHNTTSA. Residues 2227–2269 are disordered; that stretch reads RSHSSNSSPIGKSVKTSPTTQSKHNTTSAKGFLSPGSRSPKFK. A phosphoserine mark is found at Ser2260, Ser2339, Ser2391, Ser2393, Ser2465, and Ser2471.

The protein belongs to the RIF1 family. Interacts with TP53BP1 (when phosphorylated by ATM). May interact with TRF2. Interacts with SHLD2. Interacts with ERCC6 (via WHD region). Interacts with ASTE1. As to expression, highly expressed in testis.

It is found in the nucleus. The protein localises to the chromosome. Its subcellular location is the telomere. It localises to the cytoplasm. The protein resides in the cytoskeleton. It is found in the spindle. Its function is as follows. Key regulator of TP53BP1 that plays a key role in the repair of double-strand DNA breaks (DSBs) in response to DNA damage: acts by promoting non-homologous end joining (NHEJ)-mediated repair of DSBs. In response to DNA damage, interacts with ATM-phosphorylated TP53BP1. Interaction with TP53BP1 leads to dissociate the interaction between NUDT16L1/TIRR and TP53BP1, thereby unmasking the tandem Tudor-like domain of TP53BP1 and allowing recruitment to DNA DSBs. Once recruited to DSBs, RIF1 and TP53BP1 act by promoting NHEJ-mediated repair of DSBs. In the same time, RIF1 and TP53BP1 specifically counteract the function of BRCA1 by blocking DSBs resection via homologous recombination (HR) during G1 phase. Also required for immunoglobulin class-switch recombination (CSR) during antibody genesis, a process that involves the generation of DNA DSBs. Promotes NHEJ of dysfunctional telomeres. The chain is Telomere-associated protein RIF1 from Homo sapiens (Human).